A 280-amino-acid chain; its full sequence is Lipase chaperone (280 aa).

The chain crosses the membrane as a helical span at residues 5-22 (ALTIITIALGSLGAVYFL).

Belongs to the lipase chaperone family.

The protein localises to the cell inner membrane. Its function is as follows. May be involved in the folding of the extracellular lipase during its passage through the periplasm. The sequence is that of Lipase chaperone (lifO) from Vibrio vulnificus (strain CMCP6).